We begin with the raw amino-acid sequence, 288 residues long: Chemotaxis protein methyltransferase 2 (288 aa).

A CheR-type methyltransferase domain is found at 1 to 280 (MNEIVITDTD…TGYYKPHKGK (280 aa)). S-adenosyl-L-methionine is bound by residues Asn-76, Thr-78, Arg-82, Glu-119, Asp-145, 200–201 (NL), and 219–220 (RN).

The enzyme catalyses L-glutamyl-[protein] + S-adenosyl-L-methionine = [protein]-L-glutamate 5-O-methyl ester + S-adenosyl-L-homocysteine. Methylation of the membrane-bound methyl-accepting chemotaxis proteins (MCP) to form gamma-glutamyl methyl ester residues in MCP. The sequence is that of Chemotaxis protein methyltransferase 2 (cheR2) from Vibrio cholerae serotype O1 (strain ATCC 39315 / El Tor Inaba N16961).